The chain runs to 352 residues: RNA 3'-terminal phosphate cyclase (352 aa).

ATP-binding positions include glutamine 100 and 297–301 (HLADQ). The active-site Tele-AMP-histidine intermediate is histidine 322.

It belongs to the RNA 3'-terminal cyclase family. Type 1 subfamily.

The protein localises to the cytoplasm. It catalyses the reaction a 3'-end 3'-phospho-ribonucleotide-RNA + ATP = a 3'-end 2',3'-cyclophospho-ribonucleotide-RNA + AMP + diphosphate. In terms of biological role, catalyzes the conversion of 3'-phosphate to a 2',3'-cyclic phosphodiester at the end of RNA. The mechanism of action of the enzyme occurs in 3 steps: (A) adenylation of the enzyme by ATP; (B) transfer of adenylate to an RNA-N3'P to produce RNA-N3'PP5'A; (C) and attack of the adjacent 2'-hydroxyl on the 3'-phosphorus in the diester linkage to produce the cyclic end product. The biological role of this enzyme is unknown but it is likely to function in some aspects of cellular RNA processing. This chain is RNA 3'-terminal phosphate cyclase, found in Methanosarcina mazei (strain ATCC BAA-159 / DSM 3647 / Goe1 / Go1 / JCM 11833 / OCM 88) (Methanosarcina frisia).